A 286-amino-acid chain; its full sequence is Putative cyclin-H (286 aa).

A Cyclin N-terminal domain is found at 79-148 (AIIYIKRFYL…ILESLNFNLI (70 aa)). Residues 235-286 (NNNNNNNNNNNNNNNNNNNNNNNNNNNNNNNNNNNNNNNNNNNNNNNNNLLL) form a disordered region.

The protein belongs to the cyclin family. Cyclin C subfamily.

It localises to the nucleus. Functionally, may regulate cdk7 involved in transcription regulation and cell cycle progression. In Dictyostelium discoideum (Social amoeba), this protein is Putative cyclin-H (cycH).